Here is a 950-residue protein sequence, read N- to C-terminus: Inactive atromentin synthetase invA4 (950 aa).

Residues 37 to 460 (SRAVSQYPNH…SGRIKDTVVV (424 aa)) are adenylation (A) domain. In terms of domain architecture, Carrier spans 592 to 670 (APSTETEKTL…TLAKYVDSLV (79 aa)). Residues 597-667 (TEKTLAGIYA…EIITLAKYVD (71 aa)) form a thiolation and peptide carrier (T) domain region. S629 is modified (O-(pantetheine 4'-phosphoryl)serine). Residues 693-797 (PIFMVHPGIG…GIIDMIPHHM (105 aa)) form a thioesterase (TE) domain region.

This sequence belongs to the ATP-dependent AMP-binding enzyme family.

Inactive atromentin synthetase homolog. Does not accept 4-hydroxyphenylpyruvate (4-HPP) as substrate. This Paxillus involutus (Naked brimcap) protein is Inactive atromentin synthetase invA4 (invA4).